The sequence spans 210 residues: ATP-dependent Clp protease proteolytic subunit (210 aa).

Catalysis depends on S106, which acts as the Nucleophile. H131 is a catalytic residue.

It belongs to the peptidase S14 family. As to quaternary structure, fourteen ClpP subunits assemble into 2 heptameric rings which stack back to back to give a disk-like structure with a central cavity, resembling the structure of eukaryotic proteasomes.

The protein resides in the cytoplasm. It catalyses the reaction Hydrolysis of proteins to small peptides in the presence of ATP and magnesium. alpha-casein is the usual test substrate. In the absence of ATP, only oligopeptides shorter than five residues are hydrolyzed (such as succinyl-Leu-Tyr-|-NHMec, and Leu-Tyr-Leu-|-Tyr-Trp, in which cleavage of the -Tyr-|-Leu- and -Tyr-|-Trp bonds also occurs).. In terms of biological role, cleaves peptides in various proteins in a process that requires ATP hydrolysis. Has a chymotrypsin-like activity. Plays a major role in the degradation of misfolded proteins. This is ATP-dependent Clp protease proteolytic subunit from Afipia carboxidovorans (strain ATCC 49405 / DSM 1227 / KCTC 32145 / OM5) (Oligotropha carboxidovorans).